The primary structure comprises 683 residues: Phenoloxidase 3 (683 aa).

Residues 1 to 48 (MADKKNLLLLFDHPTEPVFMDKGGNGTVFDVPASYVTDRYNKMCKKVQ) constitute a propeptide that is removed on maturation. Asn25 carries N-linked (GlcNAc...) asparagine glycosylation. The Cu cation site is built by His209, His213, and His239. Glu351 functions as the Proton acceptor in the catalytic mechanism. N-linked (GlcNAc...) asparagine glycosylation occurs at Asn358. Positions 366, 370, and 406 each coordinate Cu cation. Asn492 and Asn514 each carry an N-linked (GlcNAc...) asparagine glycan. 2 disulfide bridges follow: Cys574-Cys617 and Cys576-Cys624.

It belongs to the tyrosinase family. Cu(2+) serves as cofactor. In terms of processing, upon activation, a trypsin type protease cleaves prophenol oxidase to yield the active enzyme.

The protein resides in the secreted. The catalysed reaction is 2 L-dopa + O2 = 2 L-dopaquinone + 2 H2O. The enzyme catalyses L-tyrosine + O2 = L-dopaquinone + H2O. Its function is as follows. This is a copper-containing oxidase that functions in the formation of pigments such as melanins and other polyphenolic compounds. Catalyzes the rate-limiting conversions of tyrosine to DOPA, DOPA to DOPA-quinone and possibly 5,6 dihydroxyindole to indole-5'6 quinone. The sequence is that of Phenoloxidase 3 (PPO3) from Drosophila erecta (Fruit fly).